A 247-amino-acid chain; its full sequence is Adenosylcobinamide-GDP ribazoletransferase (247 aa).

Helical transmembrane passes span 34 to 54, 59 to 79, 113 to 133, and 194 to 214; these read IITFPLIGLLLGAISGLVFMV, CGVPLAALFSVLVLALMTGGF, GGLALIFVVLAKILVLSELAL, and VLLPGMHGVAAMVVTMVAIFI.

This sequence belongs to the CobS family. The cofactor is Mg(2+).

It is found in the cell inner membrane. The catalysed reaction is alpha-ribazole + adenosylcob(III)inamide-GDP = adenosylcob(III)alamin + GMP + H(+). It carries out the reaction alpha-ribazole 5'-phosphate + adenosylcob(III)inamide-GDP = adenosylcob(III)alamin 5'-phosphate + GMP + H(+). The protein operates within cofactor biosynthesis; adenosylcobalamin biosynthesis; adenosylcobalamin from cob(II)yrinate a,c-diamide: step 7/7. In terms of biological role, joins adenosylcobinamide-GDP and alpha-ribazole to generate adenosylcobalamin (Ado-cobalamin). Also synthesizes adenosylcobalamin 5'-phosphate from adenosylcobinamide-GDP and alpha-ribazole 5'-phosphate. The protein is Adenosylcobinamide-GDP ribazoletransferase of Escherichia coli (strain ATCC 8739 / DSM 1576 / NBRC 3972 / NCIMB 8545 / WDCM 00012 / Crooks).